The sequence spans 429 residues: UDP-N-acetylglucosamine 1-carboxyvinyltransferase (429 aa).

Residue 22 to 23 (KN) coordinates phosphoenolpyruvate. R102 is a binding site for UDP-N-acetyl-alpha-D-glucosamine. Catalysis depends on C126, which acts as the Proton donor. C126 is subject to 2-(S-cysteinyl)pyruvic acid O-phosphothioketal. Residues 131-135 (RPVDL), D316, and I338 each bind UDP-N-acetyl-alpha-D-glucosamine.

It belongs to the EPSP synthase family. MurA subfamily.

It localises to the cytoplasm. It catalyses the reaction phosphoenolpyruvate + UDP-N-acetyl-alpha-D-glucosamine = UDP-N-acetyl-3-O-(1-carboxyvinyl)-alpha-D-glucosamine + phosphate. It functions in the pathway cell wall biogenesis; peptidoglycan biosynthesis. Functionally, cell wall formation. Adds enolpyruvyl to UDP-N-acetylglucosamine. This Rhodopseudomonas palustris (strain BisA53) protein is UDP-N-acetylglucosamine 1-carboxyvinyltransferase.